The sequence spans 367 residues: Glutamate 5-kinase (367 aa).

An ATP-binding site is contributed by Lys-10. The substrate site is built by Ser-50, Asp-137, and Asn-149. ATP-binding positions include 169-170 (TD) and 211-217 (TGGMSTK). Residues 275 to 353 (AGEITVDEGA…QEIDAILGYE (79 aa)) form the PUA domain.

This sequence belongs to the glutamate 5-kinase family.

Its subcellular location is the cytoplasm. The enzyme catalyses L-glutamate + ATP = L-glutamyl 5-phosphate + ADP. It functions in the pathway amino-acid biosynthesis; L-proline biosynthesis; L-glutamate 5-semialdehyde from L-glutamate: step 1/2. Its function is as follows. Catalyzes the transfer of a phosphate group to glutamate to form L-glutamate 5-phosphate. This chain is Glutamate 5-kinase, found in Shigella flexneri.